The following is a 490-amino-acid chain: Bifunctional protein HldE (490 aa).

Positions 1-328 (MFSFDALLQA…LRRRILPHAS (328 aa)) are ribokinase. ATP is bound at residue 205-208 (NRKE). The active site involves aspartate 275. Residues 358–490 (FTNGCFDILH…LVARAREGQS (133 aa)) form a cytidylyltransferase region.

It in the N-terminal section; belongs to the carbohydrate kinase PfkB family. The protein in the C-terminal section; belongs to the cytidylyltransferase family. In terms of assembly, homodimer.

The catalysed reaction is D-glycero-beta-D-manno-heptose 7-phosphate + ATP = D-glycero-beta-D-manno-heptose 1,7-bisphosphate + ADP + H(+). It catalyses the reaction D-glycero-beta-D-manno-heptose 1-phosphate + ATP + H(+) = ADP-D-glycero-beta-D-manno-heptose + diphosphate. It functions in the pathway nucleotide-sugar biosynthesis; ADP-L-glycero-beta-D-manno-heptose biosynthesis; ADP-L-glycero-beta-D-manno-heptose from D-glycero-beta-D-manno-heptose 7-phosphate: step 1/4. Its pathway is nucleotide-sugar biosynthesis; ADP-L-glycero-beta-D-manno-heptose biosynthesis; ADP-L-glycero-beta-D-manno-heptose from D-glycero-beta-D-manno-heptose 7-phosphate: step 3/4. Functionally, catalyzes the phosphorylation of D-glycero-D-manno-heptose 7-phosphate at the C-1 position to selectively form D-glycero-beta-D-manno-heptose-1,7-bisphosphate. In terms of biological role, catalyzes the ADP transfer from ATP to D-glycero-beta-D-manno-heptose 1-phosphate, yielding ADP-D-glycero-beta-D-manno-heptose. The chain is Bifunctional protein HldE from Rhodopseudomonas palustris (strain TIE-1).